A 1102-amino-acid chain; its full sequence is WASH complex subunit 4 (1102 aa).

This sequence belongs to the SWIP family. As to quaternary structure, component of the WASH complex.

The protein resides in the early endosome. Functionally, acts at least in part as component of the WASH complex which may regulate wash nucleation-promoting factor (NPF) activity and is required for its membrane targeting during endosomal sorting. During embryogenesis, not involved in the wash-dependent developmental migration of hemocytes anteriorly from the tail. The chain is WASH complex subunit 4 from Drosophila melanogaster (Fruit fly).